A 60-amino-acid polypeptide reads, in one-letter code: Large ribosomal subunit protein eL37 (60 aa).

The Zn(2+) site is built by Cys19, Cys22, Cys34, and Cys37. The C4-type zinc finger occupies 19–37 (CRRCGSISYHARHKVCSAC).

The protein belongs to the eukaryotic ribosomal protein eL37 family. Zn(2+) serves as cofactor.

In terms of biological role, binds to the 23S rRNA. This Methanosphaerula palustris (strain ATCC BAA-1556 / DSM 19958 / E1-9c) protein is Large ribosomal subunit protein eL37.